The primary structure comprises 212 residues: ATP phosphoribosyltransferase (212 aa).

The protein belongs to the ATP phosphoribosyltransferase family. Short subfamily. As to quaternary structure, heteromultimer composed of HisG and HisZ subunits.

It localises to the cytoplasm. The catalysed reaction is 1-(5-phospho-beta-D-ribosyl)-ATP + diphosphate = 5-phospho-alpha-D-ribose 1-diphosphate + ATP. It functions in the pathway amino-acid biosynthesis; L-histidine biosynthesis; L-histidine from 5-phospho-alpha-D-ribose 1-diphosphate: step 1/9. Functionally, catalyzes the condensation of ATP and 5-phosphoribose 1-diphosphate to form N'-(5'-phosphoribosyl)-ATP (PR-ATP). Has a crucial role in the pathway because the rate of histidine biosynthesis seems to be controlled primarily by regulation of HisG enzymatic activity. This Prochlorococcus marinus (strain AS9601) protein is ATP phosphoribosyltransferase.